We begin with the raw amino-acid sequence, 381 residues long: Chymosin (381 aa).

The N-terminal stretch at 1 to 16 (MRCLVVLLAVFALSQG) is a signal peptide. The propeptide at 17–58 (AEITRIPLYKGKSLRKALKEHGLLEDFLQKQQYGISSKYSGF) is activation peptide. Residues 74–378 (YFGKIYLGTP…DRANNLVGLA (305 aa)) form the Peptidase A1 domain. Residue Asp-92 is part of the active site. 2 cysteine pairs are disulfide-bonded: Cys-105-Cys-110 and Cys-265-Cys-269. Asp-274 is an active-site residue. An intrachain disulfide couples Cys-308 to Cys-341.

This sequence belongs to the peptidase A1 family. In terms of assembly, monomer.

It catalyses the reaction Broad specificity similar to that of pepsin A. Clots milk by cleavage of a single 104-Ser-Phe-|-Met-Ala-107 bond in kappa-chain of casein.. Functionally, chymosin is synthesized in the mucosa of the abomasum (fourth stomach) of young (unweaned) ruminants. The enzyme hydrolyzes casein to paracasein. In Bos taurus (Bovine), this protein is Chymosin (CYM).